Consider the following 742-residue polypeptide: Cullin-2 (742 aa).

The Cullin neddylation domain maps to aspartate 672 to asparagine 734. A Glycyl lysine isopeptide (Lys-Gly) (interchain with G-Cter in NEDD8) cross-link involves residue lysine 686.

The protein belongs to the cullin family. Interacts with SKIP17 and FBW2/SKIP18. In terms of processing, neddylated; which enhances the ubiquitination activity of E3 ubiquitin-protein ligase complexes.

Functionally, core component of multiple SCF (SKP1-CUL1-F-box protein) E3 ubiquitin-protein ligase complexes. Involved in ubiquitination and subsequent proteasomal degradation of target proteins. The protein is Cullin-2 (CUL2) of Arabidopsis thaliana (Mouse-ear cress).